The sequence spans 97 residues: Large ribosomal subunit protein bL28 (97 aa).

Belongs to the bacterial ribosomal protein bL28 family.

This Bartonella quintana (strain Toulouse) (Rochalimaea quintana) protein is Large ribosomal subunit protein bL28.